The following is a 992-amino-acid chain: RNA-binding motif protein, X-linked-like-3 (992 aa).

Positions 8-86 (EKLFVGGLNL…KAIMVAQTIK (79 aa)) constitute an RRM domain. Disordered regions lie at residues 91-130 (SSRW…PDDG), 144-169 (APMP…DPGD), 188-207 (PDYC…GRDH), 278-385 (DHLP…DSSS), 397-511 (EEYQ…HRYR), 562-588 (SLDA…SHRY), and 644-992 (NSGG…QSRY). The span at 284–296 (YSGGRSSSSNSYS) shows a compositional bias: low complexity. Basic and acidic residues predominate over residues 297 to 316 (RSDRYGEEGCYEEYRGRSPD). Residues 318–334 (HSGGRNSSSNSYGQSHH) are compositionally biased toward low complexity. Over residues 335-371 (YGGEGRYEEYRGRYEEYRGRSHEARSGGRSTDAHSGG) the composition is skewed to basic and acidic residues. Low complexity predominate over residues 454–471 (THSGGRSSSSNSYGQSHR). Basic and acidic residues predominate over residues 472 to 488 (YGGEGHYEYRGRSHDAH). Composition is skewed to polar residues over residues 564–574 (DANSGGRSPNA), 644–664 (NSGG…SQSH), and 752–774 (DANS…SNSY). Positions 785 to 798 (HYEEYRGRSHDTHS) are enriched in basic and acidic residues. Over residues 818 to 828 (GRNSFSNSYGQ) the composition is skewed to polar residues. Composition is skewed to basic and acidic residues over residues 831–842 (HYGRGGRYEEYQ), 920–948 (SGDH…RPDR), and 981–992 (GRFERGEGQSRY).

This is RNA-binding motif protein, X-linked-like-3 (RBMXL3) from Pan troglodytes (Chimpanzee).